Here is a 103-residue protein sequence, read N- to C-terminus: MQKIRKGDSVVVLSGKDKGRKGEVLKVMPKDEQALVSGINIVKRHQRQTQTQEAGIISKEAPIHLSNLAIADPKDGKPTRVGFRVEDGKKVRVAKRSGALIDG.

Belongs to the universal ribosomal protein uL24 family. Part of the 50S ribosomal subunit.

In terms of biological role, one of two assembly initiator proteins, it binds directly to the 5'-end of the 23S rRNA, where it nucleates assembly of the 50S subunit. Its function is as follows. One of the proteins that surrounds the polypeptide exit tunnel on the outside of the subunit. The protein is Large ribosomal subunit protein uL24 of Brucella abortus (strain S19).